The chain runs to 364 residues: 3-isopropylmalate dehydrogenase (364 aa).

76–89 (GPKWDGNAPEKRPE) is an NAD(+) binding site. Residues arginine 96, arginine 106, arginine 134, and aspartate 223 each contribute to the substrate site. Residues aspartate 223, aspartate 247, and aspartate 251 each coordinate Mg(2+). 281 to 293 (GSAPDIAGTGAAN) lines the NAD(+) pocket.

Belongs to the isocitrate and isopropylmalate dehydrogenases family. LeuB type 1 subfamily. Homodimer. It depends on Mg(2+) as a cofactor. Mn(2+) is required as a cofactor.

It is found in the cytoplasm. It catalyses the reaction (2R,3S)-3-isopropylmalate + NAD(+) = 4-methyl-2-oxopentanoate + CO2 + NADH. It functions in the pathway amino-acid biosynthesis; L-leucine biosynthesis; L-leucine from 3-methyl-2-oxobutanoate: step 3/4. Its function is as follows. Catalyzes the oxidation of 3-carboxy-2-hydroxy-4-methylpentanoate (3-isopropylmalate) to 3-carboxy-4-methyl-2-oxopentanoate. The product decarboxylates to 4-methyl-2 oxopentanoate. The protein is 3-isopropylmalate dehydrogenase of Shouchella clausii (strain KSM-K16) (Alkalihalobacillus clausii).